The chain runs to 205 residues: Protein-L-isoaspartate O-methyltransferase (205 aa).

Ser56 is an active-site residue.

Belongs to the methyltransferase superfamily. L-isoaspartyl/D-aspartyl protein methyltransferase family.

The protein resides in the cytoplasm. The enzyme catalyses [protein]-L-isoaspartate + S-adenosyl-L-methionine = [protein]-L-isoaspartate alpha-methyl ester + S-adenosyl-L-homocysteine. Catalyzes the methyl esterification of L-isoaspartyl residues in peptides and proteins that result from spontaneous decomposition of normal L-aspartyl and L-asparaginyl residues. It plays a role in the repair and/or degradation of damaged proteins. This is Protein-L-isoaspartate O-methyltransferase from Aeromonas salmonicida (strain A449).